The following is a 706-amino-acid chain: Translation initiation factor IF-2 (706 aa).

The segment covering A55–D81 has biased composition (basic and acidic residues). A disordered region spans residues A55–I127. Residues V82–K98 show a composition bias toward low complexity. The 170-residue stretch at V207–K376 folds into the tr-type G domain. A G1 region spans residues G216–T223. Position 216–223 (G216–T223) interacts with GTP. The G2 stretch occupies residues G241 to H245. Residues D262–G265 are G3. Residues D262 to H266 and N316 to D319 contribute to the GTP site. The G4 stretch occupies residues N316–D319. The G5 stretch occupies residues S352 to K354.

The protein belongs to the TRAFAC class translation factor GTPase superfamily. Classic translation factor GTPase family. IF-2 subfamily.

It localises to the cytoplasm. One of the essential components for the initiation of protein synthesis. Protects formylmethionyl-tRNA from spontaneous hydrolysis and promotes its binding to the 30S ribosomal subunits. Also involved in the hydrolysis of GTP during the formation of the 70S ribosomal complex. The sequence is that of Translation initiation factor IF-2 from Bacillus pumilus (strain SAFR-032).